Here is a 213-residue protein sequence, read N- to C-terminus: Cytidylate kinase (213 aa).

9-17 (GPAASGKGT) contacts ATP.

Belongs to the cytidylate kinase family. Type 1 subfamily.

The protein resides in the cytoplasm. It carries out the reaction CMP + ATP = CDP + ADP. The enzyme catalyses dCMP + ATP = dCDP + ADP. The polypeptide is Cytidylate kinase (Caulobacter vibrioides (strain ATCC 19089 / CIP 103742 / CB 15) (Caulobacter crescentus)).